Reading from the N-terminus, the 125-residue chain is Small ribosomal subunit protein uS12 (125 aa).

At Asp-89 the chain carries 3-methylthioaspartic acid.

It belongs to the universal ribosomal protein uS12 family. As to quaternary structure, part of the 30S ribosomal subunit. Contacts proteins S8 and S17. May interact with IF1 in the 30S initiation complex.

With S4 and S5 plays an important role in translational accuracy. Its function is as follows. Interacts with and stabilizes bases of the 16S rRNA that are involved in tRNA selection in the A site and with the mRNA backbone. Located at the interface of the 30S and 50S subunits, it traverses the body of the 30S subunit contacting proteins on the other side and probably holding the rRNA structure together. The combined cluster of proteins S8, S12 and S17 appears to hold together the shoulder and platform of the 30S subunit. The sequence is that of Small ribosomal subunit protein uS12 from Clostridium acetobutylicum (strain ATCC 824 / DSM 792 / JCM 1419 / IAM 19013 / LMG 5710 / NBRC 13948 / NRRL B-527 / VKM B-1787 / 2291 / W).